Here is a 627-residue protein sequence, read N- to C-terminus: Chaperone protein DnaK (627 aa).

A Phosphothreonine; by autocatalysis modification is found at threonine 197. Low complexity predominate over residues 596–615; that stretch reads MYAQGGDQGQQAAPQQEQSG. Residues 596-627 are disordered; the sequence is MYAQGGDQGQQAAPQQEQSGDNVEDVEFEEVK. Residues 617–627 show a composition bias toward acidic residues; it reads NVEDVEFEEVK.

This sequence belongs to the heat shock protein 70 family.

Acts as a chaperone. The polypeptide is Chaperone protein DnaK (Flavobacterium johnsoniae (strain ATCC 17061 / DSM 2064 / JCM 8514 / BCRC 14874 / CCUG 350202 / NBRC 14942 / NCIMB 11054 / UW101) (Cytophaga johnsonae)).